A 157-amino-acid polypeptide reads, in one-letter code: Ribosomal RNA large subunit methyltransferase H (157 aa).

Residues Leu74, Gly106, and Leu125 to Phe130 contribute to the S-adenosyl-L-methionine site.

Belongs to the RNA methyltransferase RlmH family. As to quaternary structure, homodimer.

Its subcellular location is the cytoplasm. The enzyme catalyses pseudouridine(1915) in 23S rRNA + S-adenosyl-L-methionine = N(3)-methylpseudouridine(1915) in 23S rRNA + S-adenosyl-L-homocysteine + H(+). Functionally, specifically methylates the pseudouridine at position 1915 (m3Psi1915) in 23S rRNA. The sequence is that of Ribosomal RNA large subunit methyltransferase H from Lawsonia intracellularis (strain PHE/MN1-00).